Here is a 282-residue protein sequence, read N- to C-terminus: Bis(5'-nucleosyl)-tetraphosphatase, symmetrical (282 aa).

This sequence belongs to the Ap4A hydrolase family.

The enzyme catalyses P(1),P(4)-bis(5'-adenosyl) tetraphosphate + H2O = 2 ADP + 2 H(+). Hydrolyzes diadenosine 5',5'''-P1,P4-tetraphosphate to yield ADP. This Burkholderia mallei (strain NCTC 10247) protein is Bis(5'-nucleosyl)-tetraphosphatase, symmetrical.